The primary structure comprises 374 residues: tRNA (guanine(26)-N(2))-dimethyltransferase (374 aa).

The region spanning 4–371 (IEIREGKASL…KEIDEIVNCI (368 aa)) is the Trm1 methyltransferase domain. S-adenosyl-L-methionine is bound by residues R44, R69, D87, D113, and A114. 4 residues coordinate Zn(2+): C244, C247, C261, and C264.

The protein belongs to the class I-like SAM-binding methyltransferase superfamily. Trm1 family.

The catalysed reaction is guanosine(26) in tRNA + 2 S-adenosyl-L-methionine = N(2)-dimethylguanosine(26) in tRNA + 2 S-adenosyl-L-homocysteine + 2 H(+). Functionally, dimethylates a single guanine residue at position 26 of a number of tRNAs using S-adenosyl-L-methionine as donor of the methyl groups. In Sulfurisphaera tokodaii (strain DSM 16993 / JCM 10545 / NBRC 100140 / 7) (Sulfolobus tokodaii), this protein is tRNA (guanine(26)-N(2))-dimethyltransferase.